A 294-amino-acid polypeptide reads, in one-letter code: Histone deacetylase HDT3 (294 aa).

Methionine 1 is subject to N-acetylmethionine. A required to repress transcription region spans residues 2–5; the sequence is EFWG. Residues 124–269 form a disordered region; sequence QVNFQLPNED…TPKSAGAFGC (146 aa). Residues 140 to 188 are compositionally biased toward acidic residues; sequence DDADGSEEDSSDDDDSENSGDEEEEKVTAESDSEEDDSSDDEEDDSSEE. Positions 189 to 202 are enriched in basic and acidic residues; that stretch reads ETPKKPEEPKKRSA. Over residues 203–213 the composition is skewed to low complexity; it reads EPNSSKNPASN. Over residues 252–262 the composition is skewed to polar residues; sequence GETSKQQQTPK. The C2H2-type zinc finger occupies 267–290; that stretch reads FGCKSCTRTFTSEMGLQSHTKAKH.

Belongs to the histone deacetylase HD2 family. Interacts with DNMT2. Expressed in leaves, roots, stems, young plantlets, flowers and siliques. Highest levels in ovules, embryos, shoot apical meristems and first leaves. Also expressed in somatic embryos.

The protein resides in the nucleus. Its subcellular location is the nucleolus. Probably mediates the deacetylation of lysine residues on the N-terminal part of the core histones (H2A, H2B, H3 and H4). Histone deacetylation gives a tag for epigenetic repression and plays an important role in transcriptional regulation, cell cycle progression and developmental events. Involved in the modulation of abscisic acid and stress-responsive genes. The chain is Histone deacetylase HDT3 (HDT3) from Arabidopsis thaliana (Mouse-ear cress).